A 323-amino-acid polypeptide reads, in one-letter code: Homocysteine S-methyltransferase 1 (323 aa).

Residues Val-3–Leu-317 enclose the Hcy-binding domain. Zn(2+) is bound by residues Cys-235, Cys-302, and Cys-303.

Monomer. The cofactor is Zn(2+).

The catalysed reaction is S-methyl-L-methionine + L-homocysteine = 2 L-methionine + H(+). Its function is as follows. Catalyzes methyl transfer from S-methylmethionine (SMM) to adenosyl-L-homocysteine (AdoMet). SMM degradation (by HMT-1, HMT-2, HMT-3 and HMT-4) and biosynthesis (by MMT1) constitute the SMM cycle in plants, which is probably required to achieve short term control of AdoMet level. The protein is Homocysteine S-methyltransferase 1 (HMT-1) of Zea mays (Maize).